A 179-amino-acid polypeptide reads, in one-letter code: MITGYKPHELGIFNDKHPRIGIIKKALENRLRLLLDEGLEWVIISGQQGVESWSAEVVWTLKKEFPHLKYAVITPFLEQEKNWQDPKKEKYQTIIARADFVTSITKKPYEAPWQFIEKDKFIIQNTDGLLLIYDEENEGSPKYIKRLAEKFMESHDYSLLTINAYDLQMIAEEIQQQDW.

It belongs to the UPF0398 family.

In Lysinibacillus sphaericus (strain C3-41), this protein is UPF0398 protein Bsph_0756.